The primary structure comprises 235 residues: Nitrile hydratase subunit beta (235 aa).

The protein belongs to the nitrile hydratase subunit beta family. In terms of assembly, heterodimer of an alpha and a beta chain.

It catalyses the reaction an aliphatic primary amide = an aliphatic nitrile + H2O. NHase catalyzes the hydration of various nitrile compounds to the corresponding amides. In Rhodococcus sp, this protein is Nitrile hydratase subunit beta (nthB).